Here is a 652-residue protein sequence, read N- to C-terminus: MVDLFQWLKFYSMRRLGQVAITLVLLNLFVFLGYKFTPSTVIGSPSWEPAVVPTVFNESYLDSLQFTDINVDSFLSDTNGRISVTCDSLAYKGLVKTSKKKELDCDMAYIRRKIFSSEEYGVLADLEAQDITEEQRIKKHWFTFYGSSVYLPEHEVHYLVRRVLFSKVGRADTPVISLLVAQLYDKDWNELTPHTLEIVNPATGNVTPQTFPQLIHVPIEWSVDDKWKGTEDPRVFLKPSKTGVSEPIVLFNLQSSLCDGKRGMFVTSPFRSDKVNLLDIEDKERPNSEKNWSPFFLDDVEVSKYSTGYVHFVYSFNPLKVIKCSLDTGACRMIYESPEEGRFGSELRGATPMVKLPVHLSLPKGKEVWVAFPRTRLRDCGCSRTTYRPVLTLFVKEGNKFYTELISSSIDFHIDVLSYDAKGESCSGSISVLIPNGIDSWDVSKKQGGKSDILTLTLSEADRNTVVVHVKGLLDYLLVLNGEGPIHDSHSFKNVLSTNHFKSDTTLLNSVKAAECAIFSSRDYCKKYGETRGEPARYAKQMENERKEKEKKEKEAKEKLEAEKAEMEEAVRKAQEAIAQKEREKEEAEQEKKAQQEAKEKEAEEKAAKEKEAKENEAKKKIIVEKLAKEQEEAEKLEAKKKLYQLQEEERS.

Residues 1 to 15 are Cytoplasmic-facing; that stretch reads MVDLFQWLKFYSMRR. A helical transmembrane segment spans residues 16–34; the sequence is LGQVAITLVLLNLFVFLGY. Residues 35 to 652 are Extracellular-facing; it reads KFTPSTVIGS…LYQLQEEERS (618 aa). Asn-57 is a glycosylation site (N-linked (GlcNAc...) asparagine). Residues 535–652 are a coiled coil; it reads PARYAKQMEN…LYQLQEEERS (118 aa). The tract at residues 536–621 is disordered; sequence ARYAKQMENE…EAKENEAKKK (86 aa).

Belongs to the BMT family.

Its subcellular location is the membrane. In terms of biological role, beta-mannosyltransferase involved in cell wall biosynthesis. Involved in the beta-mannosylation of outer chains of N-glycans. This chain is Beta-mannosyltransferase 1 (BMT1), found in Komagataella phaffii (strain ATCC 76273 / CBS 7435 / CECT 11047 / NRRL Y-11430 / Wegner 21-1) (Yeast).